Reading from the N-terminus, the 427-residue chain is Histidine--tRNA ligase (427 aa).

Belongs to the class-II aminoacyl-tRNA synthetase family. Homodimer.

The protein resides in the cytoplasm. The catalysed reaction is tRNA(His) + L-histidine + ATP = L-histidyl-tRNA(His) + AMP + diphosphate + H(+). This is Histidine--tRNA ligase from Streptococcus suis (strain 98HAH33).